Here is a 486-residue protein sequence, read N- to C-terminus: Vanillin dehydrogenase (486 aa).

Residues 210–211 (GP), 230–231 (GS), and 252–254 (ELG) each bind NAD(+). Glu-252 (proton acceptor) is an active-site residue. Cys-286 acts as the Nucleophile in catalysis. 380-382 (EVF) is an NAD(+) binding site.

Belongs to the aldehyde dehydrogenase family.

It carries out the reaction vanillin + NAD(+) + H2O = vanillate + NADH + 2 H(+). In terms of biological role, catalyzes NAD(+)-dependent oxidation of vanillin to vanillate. Also oxidizes other aromatic aldehydes including benzaldehyde, coniferyl aldehyde and cinnamaldehyde, but has a preference for vanillin. Not active with NADP(+). Involved in the degradation pathway of lignin-derived aromatic compounds of plant cell walls. Catalyzes the conversion of vanillin to vanillate due to toxicity of vanillin to the cells. The chain is Vanillin dehydrogenase from Amycolatopsis sp. (strain ATCC 39116 / 75iv2).